The following is a 266-amino-acid chain: uncharacterized protein (266 aa).

This is an uncharacterized protein from Mycobacterium tuberculosis (strain CDC 1551 / Oshkosh).